Consider the following 249-residue polypeptide: tRNA pseudouridine synthase A (249 aa).

Residue D53 is the Nucleophile of the active site. Y111 provides a ligand contact to substrate.

It belongs to the tRNA pseudouridine synthase TruA family. As to quaternary structure, homodimer.

The enzyme catalyses uridine(38/39/40) in tRNA = pseudouridine(38/39/40) in tRNA. Functionally, formation of pseudouridine at positions 38, 39 and 40 in the anticodon stem and loop of transfer RNAs. This chain is tRNA pseudouridine synthase A, found in Streptococcus pneumoniae serotype 2 (strain D39 / NCTC 7466).